The primary structure comprises 704 residues: Elongation factor G (704 aa).

A tr-type G domain is found at 8–291; sequence ANVRNIGIMA…AVIEYLPSPV (284 aa). Residues 17–24, 90–94, and 144–147 contribute to the GTP site; these read AHIDAGKT, DTPGH, and NKMD.

Belongs to the TRAFAC class translation factor GTPase superfamily. Classic translation factor GTPase family. EF-G/EF-2 subfamily.

The protein resides in the cytoplasm. In terms of biological role, catalyzes the GTP-dependent ribosomal translocation step during translation elongation. During this step, the ribosome changes from the pre-translocational (PRE) to the post-translocational (POST) state as the newly formed A-site-bound peptidyl-tRNA and P-site-bound deacylated tRNA move to the P and E sites, respectively. Catalyzes the coordinated movement of the two tRNA molecules, the mRNA and conformational changes in the ribosome. This Chlorobium phaeobacteroides (strain BS1) protein is Elongation factor G.